A 677-amino-acid chain; its full sequence is Methionine--tRNA ligase (677 aa).

A 'HIGH' region motif is present at residues 15-25 (PYANGSIHLGH). Zn(2+) is bound by residues Cys-146, Cys-149, Cys-159, and Cys-162. Positions 333–337 (KMSKS) match the 'KMSKS' region motif. ATP is bound at residue Lys-336. The 103-residue stretch at 575 to 677 (DFAKVDLRVA…AGAKPGHQVK (103 aa)) folds into the tRNA-binding domain.

Belongs to the class-I aminoacyl-tRNA synthetase family. MetG type 1 subfamily. As to quaternary structure, homodimer. It depends on Zn(2+) as a cofactor.

The protein localises to the cytoplasm. The enzyme catalyses tRNA(Met) + L-methionine + ATP = L-methionyl-tRNA(Met) + AMP + diphosphate. Functionally, is required not only for elongation of protein synthesis but also for the initiation of all mRNA translation through initiator tRNA(fMet) aminoacylation. This chain is Methionine--tRNA ligase, found in Shigella flexneri serotype 5b (strain 8401).